The primary structure comprises 212 residues: Glycerol-3-phosphate acyltransferase (212 aa).

Transmembrane regions (helical) follow at residues 9–29 (AACL…GYLL), 67–87 (GPAL…VLLA), 95–115 (WLQV…VWLG), 128–148 (MFLG…MAVI), and 168–190 (LMVV…LMVL).

Belongs to the PlsY family. In terms of assembly, probably interacts with PlsX.

The protein resides in the cell inner membrane. It carries out the reaction an acyl phosphate + sn-glycerol 3-phosphate = a 1-acyl-sn-glycero-3-phosphate + phosphate. It functions in the pathway lipid metabolism; phospholipid metabolism. Its function is as follows. Catalyzes the transfer of an acyl group from acyl-phosphate (acyl-PO(4)) to glycerol-3-phosphate (G3P) to form lysophosphatidic acid (LPA). This enzyme utilizes acyl-phosphate as fatty acyl donor, but not acyl-CoA or acyl-ACP. The polypeptide is Glycerol-3-phosphate acyltransferase (Parasynechococcus marenigrum (strain WH8102)).